A 351-amino-acid chain; its full sequence is Methylthioribose-1-phosphate isomerase (351 aa).

Residues 51-53 (RGA), R94, and Q199 contribute to the substrate site. The Proton donor role is filled by D240. 250 to 251 (NK) is a substrate binding site.

It belongs to the EIF-2B alpha/beta/delta subunits family. MtnA subfamily. Homodimer.

It carries out the reaction 5-(methylsulfanyl)-alpha-D-ribose 1-phosphate = 5-(methylsulfanyl)-D-ribulose 1-phosphate. It participates in amino-acid biosynthesis; L-methionine biosynthesis via salvage pathway; L-methionine from S-methyl-5-thio-alpha-D-ribose 1-phosphate: step 1/6. Functionally, catalyzes the interconversion of methylthioribose-1-phosphate (MTR-1-P) into methylthioribulose-1-phosphate (MTRu-1-P). The sequence is that of Methylthioribose-1-phosphate isomerase from Bacillus thuringiensis (strain Al Hakam).